The primary structure comprises 288 residues: Bifunctional protein FolD (288 aa).

NADP(+)-binding positions include 166-168 and Ile-232; that span reads GAS.

Belongs to the tetrahydrofolate dehydrogenase/cyclohydrolase family. Homodimer.

The catalysed reaction is (6R)-5,10-methylene-5,6,7,8-tetrahydrofolate + NADP(+) = (6R)-5,10-methenyltetrahydrofolate + NADPH. The enzyme catalyses (6R)-5,10-methenyltetrahydrofolate + H2O = (6R)-10-formyltetrahydrofolate + H(+). Its pathway is one-carbon metabolism; tetrahydrofolate interconversion. Functionally, catalyzes the oxidation of 5,10-methylenetetrahydrofolate to 5,10-methenyltetrahydrofolate and then the hydrolysis of 5,10-methenyltetrahydrofolate to 10-formyltetrahydrofolate. The chain is Bifunctional protein FolD from Escherichia coli O8 (strain IAI1).